An 807-amino-acid polypeptide reads, in one-letter code: Ribosome-releasing factor 2, mitochondrial (807 aa).

A mitochondrion-targeting transit peptide spans 1–18; that stretch reads MFCRKYAFQTWKQFSRFY. The 289-residue stretch at 27-315 folds into the tr-type G domain; sequence SKTRNIGIIA…GITKYLPSPL (289 aa). GTP-binding positions include 36-43, 100-104, and 154-157; these read AHIDAGKT, DTPGH, and NKMD.

Belongs to the TRAFAC class translation factor GTPase superfamily. Classic translation factor GTPase family. EF-G/EF-2 subfamily.

The protein localises to the mitochondrion. Functionally, mitochondrial GTPase that mediates the disassembly of ribosomes from messenger RNA at the termination of mitochondrial protein biosynthesis. Not involved in the GTP-dependent ribosomal translocation step during translation elongation. This Candida dubliniensis (strain CD36 / ATCC MYA-646 / CBS 7987 / NCPF 3949 / NRRL Y-17841) (Yeast) protein is Ribosome-releasing factor 2, mitochondrial.